A 147-amino-acid polypeptide reads, in one-letter code: Ribonuclease 4 (147 aa).

The N-terminal stretch at 1–28 is a signal peptide; that stretch reads MALQRTHSLLLLLLLTLLGLGLVQPSYG. Glutamine 29 is modified (pyrrolidone carboxylic acid). Residues arginine 35, histidine 40, lysine 68, asparagine 71, and threonine 72 each coordinate dUMP. Histidine 40 functions as the Proton acceptor in the catalytic mechanism. 4 cysteine pairs are disulfide-bonded: cysteine 53-cysteine 109, cysteine 67-cysteine 120, cysteine 85-cysteine 135, and cysteine 92-cysteine 99. Histidine 144 acts as the Proton donor in catalysis. Position 145 (phenylalanine 145) interacts with dUMP.

The protein belongs to the pancreatic ribonuclease family.

The protein resides in the secreted. Its function is as follows. Cleaves preferentially after uridine bases. Has antimicrobial activity against uropathogenic E.coli (UPEC). Probably contributes to urinary tract sterility. In Pongo abelii (Sumatran orangutan), this protein is Ribonuclease 4 (RNASE4).